Reading from the N-terminus, the 160-residue chain is Interleukin-36 alpha (160 aa).

A propeptide spanning residues 1-7 (MNKEKEL) is cleaved from the precursor. Tyrosine 98 bears the 3'-nitrotyrosine mark.

Belongs to the IL-1 family. Interacts with TMED10; the interaction mediates the translocation from the cytoplasm into the ERGIC (endoplasmic reticulum-Golgi intermediate compartment) and thereby secretion. N-terminal truncation leads to a dramatic enhancement of its activity (&gt;1000-fold). In terms of tissue distribution, highly expressed in embryonic tissue and in tissues containing epithelial cells. Elevated expression levels are detected in chronic kidney disease; expressed inepithelia from the distal convoluted tubules (DCTs) to the cortical collecting ducts (CCDs) in single nephrons (at protein level).

The protein resides in the cytoplasm. The protein localises to the secreted. Cytokine that binds to and signals through the IL1RL2/IL-36R receptor which in turn activates NF-kappa-B and MAPK signaling pathways in target cells linked to a pro-inflammatory response. Part of the IL-36 signaling system that is thought to be present in epithelial barriers and to take part in local inflammatory response; similar to the IL-1 system with which it shares the coreceptor IL1RAP. Seems to be involved in skin inflammatory response by acting on keratinocytes, dendritic cells and indirectly on T-cells to drive tissue infiltration, cell maturation and cell proliferation. Induces the production of pro-inflammatory cytokines, including IL-12, Il-1 beta, IL-6, TNF-alpha and IL-23 in bone marrow-derived dendritic cells (BMDCs). Involved in dendritic cell maturation by stimulating the surface expression of CD80, CD86 and MHC class II. Induces the production of IFN-gamma, IL-4 and IL-17 by cultured CD4(+) T-cells and splenocytes. May play a role in pro-inflammatory effects in the lung: induces the expression of CXCL1 and CXCL2 in the lung, and the expression of TNF-alpha, IL-36c, IL-1A, IL-1B, CXCL1 and CXCL2 in isolated splenic CD11c(+) alveolar macrophages. May be involved in T-cell maturation by stimulating the surface expression of CD40 and modestly CD80 and CD86 in splenic CD11c(+) cells. May be involved in CD4(+) T-cell proliferation. Induces NF-kappa B activation in macrophages. In Mus musculus (Mouse), this protein is Interleukin-36 alpha.